The chain runs to 435 residues: Tyrosine-protein phosphatase non-receptor type 1 (435 aa).

M1 is subject to N-acetylmethionine. Positions 3-277 (MEKEFEQIDK…RFSYLAVIEG (275 aa)) constitute a Tyrosine-protein phosphatase domain. Y20 carries the post-translational modification Phosphotyrosine. S50 is modified (phosphoserine; by PKB/AKT1, CLK1 and CLK2). A Phosphotyrosine; by EGFR modification is found at Y66. Substrate-binding positions include D181 and 215 to 221 (CSAGIGR). Catalysis depends on C215, which acts as the Phosphocysteine intermediate. C215 is modified (cysteine persulfide; alternate). Position 215 is a cysteine sulfenic acid (-SOH); alternate (C215). C215 is subject to Cysteine sulfinic acid (-SO2H); alternate. An S-nitrosocysteine; in reversibly inhibited form modification is found at C215. Residues 215 to 216 (CS) constitute a cross-link (n,N-(cysteine-1,S-diyl)serine (Cys-Ser); in inhibited form). Phosphoserine; by CLK1 and CLK2 occurs at positions 242 and 243. Q262 provides a ligand contact to substrate. The segment covering 338–351 (TQEDKDCPIKEEKG) has biased composition (basic and acidic residues). The segment at 338–359 (TQEDKDCPIKEEKGSPLNAAPY) is disordered. A phosphoserine mark is found at S352, S363, and S365. Residue T368 is modified to Phosphothreonine. The residue at position 378 (S378) is a Phosphoserine; by PKC. A disordered region spans residues 378–398 (SLRGAQAASPAKGEPSLPEKD). The residue at position 386 (S386) is a Phosphoserine; by CDK1.

It belongs to the protein-tyrosine phosphatase family. Non-receptor class 1 subfamily. As to quaternary structure, interacts with EPHA3 (phosphorylated); dephosphorylates EPHA3 and may regulate its trafficking and function. Interacts with MET. Interacts with NCK1. In terms of processing, oxidized on Cys-215; the Cys-SOH formed in response to redox signaling reacts with the alpha-amido of the following residue to form a sulfenamide cross-link, triggering a conformational change that inhibits substrate binding and activity. The active site can be restored by reduction. Post-translationally, ser-50 is the major site of phosphorylation as compared to Ser-242 and Ser-243. Activated by phosphorylation at Ser-50. S-nitrosylation of Cys-215 inactivates the enzyme activity. In terms of processing, sulfhydration at Cys-215 following endoplasmic reticulum stress inactivates the enzyme activity, promoting EIF2AK3/PERK activity. As to expression, expressed in keratinocytes (at protein level).

Its subcellular location is the endoplasmic reticulum membrane. It carries out the reaction O-phospho-L-tyrosyl-[protein] + H2O = L-tyrosyl-[protein] + phosphate. In terms of biological role, tyrosine-protein phosphatase which acts as a regulator of endoplasmic reticulum unfolded protein response. Mediates dephosphorylation of EIF2AK3/PERK; inactivating the protein kinase activity of EIF2AK3/PERK. May play an important role in CKII- and p60c-src-induced signal transduction cascades. May regulate the EFNA5-EPHA3 signaling pathway which modulates cell reorganization and cell-cell repulsion. May also regulate the hepatocyte growth factor receptor signaling pathway through dephosphorylation of MET. The chain is Tyrosine-protein phosphatase non-receptor type 1 (PTPN1) from Homo sapiens (Human).